We begin with the raw amino-acid sequence, 391 residues long: Deoxyguanosinetriphosphate triphosphohydrolase-like protein (391 aa).

The HD domain occupies 62–198; it reads RLTHSLEVST…ASLADDISYI (137 aa).

The protein belongs to the dGTPase family. Type 2 subfamily.

This is Deoxyguanosinetriphosphate triphosphohydrolase-like protein from Rickettsia akari (strain Hartford).